A 146-amino-acid polypeptide reads, in one-letter code: Acidic phospholipase A2 CM-II (146 aa).

The first 21 residues, Met1–Ser21, serve as a signal peptide directing secretion. Positions Asn22–Leu27 are excised as a propeptide. Cystine bridges form between Cys38–Cys98, Cys53–Cys145, Cys55–Cys71, Cys70–Cys126, Cys77–Cys119, Cys87–Cys112, and Cys105–Cys117. 3 residues coordinate Ca(2+): Tyr54, Gly56, and Gly58. The active site involves His74. Asp75 is a binding site for Ca(2+). Asp120 is an active-site residue.

The protein belongs to the phospholipase A2 family. Group I subfamily. D49 sub-subfamily. It depends on Ca(2+) as a cofactor. Expressed by the venom gland.

Its subcellular location is the secreted. The enzyme catalyses a 1,2-diacyl-sn-glycero-3-phosphocholine + H2O = a 1-acyl-sn-glycero-3-phosphocholine + a fatty acid + H(+). In terms of biological role, PLA2 catalyzes the calcium-dependent hydrolysis of the 2-acyl groups in 3-sn-phosphoglycerides. Is able to suppress the acetylcholine (ACh)-evoked current mediated by alpha-7 (CHRNA7)-similar nAChRs in L.stagnalis neurons (IC(50)=37 nM) and to compete with alpha-bungarotoxin for binding to muscle- and alpha-7 neuronal nAChR types, as well as to AChBPs. In inhibition of alpha-bungarotoxin binding, this toxin is similarly active against T.californica nAChR (IC(50)=1.2 uM), human alpha-7 nAChR (IC(50)=3.2 uM), and L.stagnalis AChBP (IC(50)=1.0 uM), whereas it is not active against A.californica AChBP (IC(50)&gt;100 uM). The protein is Acidic phospholipase A2 CM-II of Naja kaouthia (Monocled cobra).